The following is a 556-amino-acid chain: General transcription factor IIF subunit 1 (556 aa).

Disordered regions lie at residues 82–128 (TMTS…PAAA) and 226–499 (SRLQ…PFTE). The span at 84-128 (TSAPNGTNSTGTTPNTTTTTTTTTTTTTTTTTAAGTPGAPNPAAA) shows a compositional bias: low complexity. A compositionally biased stretch (basic and acidic residues) spans 245–275 (SGKKSIEELEEAEHRNRNEDPNRYKTTNEEK). 2 stretches are compositionally biased toward acidic residues: residues 291-338 (GNGE…DVDL) and 378-394 (GDDE…DQDD). 2 stretches are compositionally biased toward basic and acidic residues: residues 415 to 427 (VKKE…DSKS) and 450 to 461 (NKSDSSVDNRES). The span at 469–492 (SSPQAVQPNSPSQQQQQQQQNIDP) shows a compositional bias: low complexity.

It belongs to the TFIIF alpha subunit family. In terms of assembly, heterodimer of an alpha and a beta subunit.

It is found in the nucleus. Functionally, TFIIF is a general transcription initiation factor that binds to RNA polymerase II and helps to recruit it to the initiation complex in collaboration with TFIIB. It promotes transcription elongation. The sequence is that of General transcription factor IIF subunit 1 (gtf2f1) from Dictyostelium discoideum (Social amoeba).